We begin with the raw amino-acid sequence, 426 residues long: Cuticle-degrading serine protease (426 aa).

Residues 1 to 21 (MLTNGLISLLAIAGLATNAFA) form the signal peptide. Positions 22-123 (GPIRKVSNAG…VEQDTVVTTY (102 aa)) are excised as a propeptide. In terms of domain architecture, Inhibitor I9 spans 39 to 122 (KYIVVLKKGL…YVEQDTVVTT (84 aa)). One can recognise a Peptidase S8 domain in the interval 130-426 (TWGLDRISHE…TNHQVTIVAS (297 aa)). The active-site Charge relay system is D164. N-linked (GlcNAc...) asparagine glycosylation occurs at N178. H200 serves as the catalytic Charge relay system. A glycan (N-linked (GlcNAc...) asparagine) is linked at N252. Residue S353 is the Charge relay system of the active site.

This sequence belongs to the peptidase S8 family.

The protein resides in the secreted. Inhibited by PMSF, SSI, the peptide Phe-Val and by Phe, but not by EDTA. Hydrolyzes gelatin, casein, the chromogenic substrate azocoll and the cuticle of the nematode P.redivivus. Immobilizes P.redivivus. This chain is Cuticle-degrading serine protease, found in Orbilia oligospora (Nematode-trapping fungus).